Reading from the N-terminus, the 191-residue chain is Large ribosomal subunit protein bL9 (191 aa).

A disordered region spans residues 151–191 (AERQAKGESLTSADAIYGVDEDALKPEDFFNPEAEIESEEE).

Belongs to the bacterial ribosomal protein bL9 family.

Functionally, binds to the 23S rRNA. This Sinorhizobium medicae (strain WSM419) (Ensifer medicae) protein is Large ribosomal subunit protein bL9.